The chain runs to 275 residues: Large ribosomal subunit protein uL2 (275 aa).

2 disordered regions span residues 222–243 and 256–275; these read GSVMNPTDHPHGGGEGRAPIGR and GGKTRRKKPSDNMIVRKRKP.

The protein belongs to the universal ribosomal protein uL2 family. In terms of assembly, part of the 50S ribosomal subunit. Forms a bridge to the 30S subunit in the 70S ribosome.

Functionally, one of the primary rRNA binding proteins. Required for association of the 30S and 50S subunits to form the 70S ribosome, for tRNA binding and peptide bond formation. It has been suggested to have peptidyltransferase activity; this is somewhat controversial. Makes several contacts with the 16S rRNA in the 70S ribosome. The protein is Large ribosomal subunit protein uL2 of Syntrophomonas wolfei subsp. wolfei (strain DSM 2245B / Goettingen).